Reading from the N-terminus, the 192-residue chain is dTTP/UTP pyrophosphatase (192 aa).

D71 serves as the catalytic Proton acceptor.

It belongs to the Maf family. YhdE subfamily. It depends on a divalent metal cation as a cofactor.

The protein localises to the cytoplasm. It catalyses the reaction dTTP + H2O = dTMP + diphosphate + H(+). The catalysed reaction is UTP + H2O = UMP + diphosphate + H(+). In terms of biological role, nucleoside triphosphate pyrophosphatase that hydrolyzes dTTP and UTP. May have a dual role in cell division arrest and in preventing the incorporation of modified nucleotides into cellular nucleic acids. The protein is dTTP/UTP pyrophosphatase of Clostridium kluyveri (strain NBRC 12016).